The chain runs to 665 residues: Target of rapamycin complex 2 subunit sin1 (665 aa).

Serine 62 is modified (phosphoserine). Polar residues-rich tracts occupy residues 65–83 (IVANDTVSNVRKPSDTKQV) and 100–109 (YATSDLSESS). The disordered stretch occupies residues 65–112 (IVANDTVSNVRKPSDTKQVNGAGGQVNHSRAEDSDYATSDLSESSDVG). The residue at position 133 (serine 133) is a Phosphoserine. Positions 255–392 (TSALRALLEH…ATPAQIKENQ (138 aa)) constitute a CRIM domain. The segment at 395–433 (YPFKSKHPTSIPEANNKTHIRHTSSTSSQSQKQAQDVKD) is disordered. Serine 404, serine 490, serine 502, and serine 530 each carry phosphoserine. The interval 517–537 (RDKKGSTQQLPTSSPQNSVYG) is disordered. The segment covering 522–536 (STQQLPTSSPQNSVY) has biased composition (polar residues). One can recognise an SIN1-type PH domain in the interval 558–659 (TYQEFLVWKR…IVSRIRALMN (102 aa)).

The protein belongs to the SIN1 family. As to quaternary structure, the target of rapamycin complex 2 (TORC2) is composed of at least bit61, pop3/wat1, sin1, ste20 and tor1. Interacts with the sty1 MAP kinase. In terms of processing, phosphorylated; under environmental stress. Either Ser-61 or Ser-62 and Ser-298, Ser-299 or Ser-301 are phosphorylated as well.

Component of the mechanistic target of rapamycin complex 2 (mTORC2), which regulates multiple cellular processes to control cell growth in response to environmental signals. In response to signals, TORC2 phosphorylates AGC protein kinase family members, such as gad8. TORC2 is required for cell survival under various stress conditions. TORC2 positively controls G1 cell-cycle arrest, sexual development and amino acid uptake. Positively regulates amino acid uptake through the control of expression of amino acid permeases. Within the mTORC2 complex, sin1 acts as a substrate adapter which recognizes and binds AGC protein kinase family members for phosphorylation by tor1. This Schizosaccharomyces pombe (strain 972 / ATCC 24843) (Fission yeast) protein is Target of rapamycin complex 2 subunit sin1.